We begin with the raw amino-acid sequence, 71 residues long: Large ribosomal subunit protein bL31 (71 aa).

Residues C16, C18, C36, and C39 each coordinate Zn(2+).

Belongs to the bacterial ribosomal protein bL31 family. Type A subfamily. In terms of assembly, part of the 50S ribosomal subunit. It depends on Zn(2+) as a cofactor.

Functionally, binds the 23S rRNA. In Petrotoga mobilis (strain DSM 10674 / SJ95), this protein is Large ribosomal subunit protein bL31.